Consider the following 531-residue polypeptide: Protein tweety homolog 2-like (531 aa).

Topologically, residues 1–44 (MASSRQDYIAPWWTYWLHNFPHLNFNFQTVDNTFKPEDASYQQS) are extracellular. A helical membrane pass occupies residues 45–65 (LVFLACVSAVALGLCLLLLSV). Topologically, residues 66 to 87 (YLTCLCCCRREEDEEVKRPDTC) are cytoplasmic. Residues 88–108 (CVTWAAVITGLVICSAVGVGF) traverse the membrane as a helical segment. Residues 109 to 213 (YGNSETNDGV…RTAFIEYYRW (105 aa)) are Extracellular-facing. Asn-129 carries N-linked (GlcNAc...) asparagine glycosylation. A helical membrane pass occupies residues 214-234 (LTYLLLLILDLVICLLACLAL). At 235–239 (AKQSR) the chain is on the cytoplasmic side. A helical membrane pass occupies residues 240-260 (WLLTVIMVCGMLTLIMSWASL). Residues 261-389 (GAGTATAVGT…GVCYDGVEGL (129 aa)) lie on the Extracellular side of the membrane. N-linked (GlcNAc...) asparagine glycosylation is found at Asn-283 and Asn-352. The helical transmembrane segment at 390–410 (LYLCLFSLLAACAFCALLCAV) threads the bilayer. The Cytoplasmic portion of the chain corresponds to 411-531 (PRAWMLIAIR…IRHFGTDFQV (121 aa)).

The protein belongs to the tweety family.

Its subcellular location is the cell membrane. Functionally, probable large-conductance Ca(2+)-activated chloride channel. This Danio rerio (Zebrafish) protein is Protein tweety homolog 2-like (ttyh2l).